Reading from the N-terminus, the 393-residue chain is Pyrimidine monooxygenase RutA (393 aa).

Residues 79-80, N145, E154, 170-171, and S220 contribute to the FMN site; these read IK and RY.

The protein belongs to the NtaA/SnaA/DszA monooxygenase family. RutA subfamily.

It carries out the reaction uracil + FMNH2 + NADH + O2 = (Z)-3-ureidoacrylate + FMN + NAD(+) + H2O + H(+). The enzyme catalyses thymine + FMNH2 + NADH + O2 = (Z)-2-methylureidoacrylate + FMN + NAD(+) + H2O + H(+). In terms of biological role, catalyzes the pyrimidine ring opening between N-3 and C-4 by an unusual flavin hydroperoxide-catalyzed mechanism, adding oxygen atoms in the process to yield ureidoacrylate peracid, that immediately reacts with FMN forming ureidoacrylate and FMN-N(5)-oxide. The FMN-N(5)-oxide reacts spontaneously with NADH to produce FMN. Requires the flavin reductase RutF to regenerate FMN in vivo. The sequence is that of Pyrimidine monooxygenase RutA from Escherichia coli O18:K1:H7 (strain IHE3034 / ExPEC).